A 79-amino-acid polypeptide reads, in one-letter code: MASKEEILAGLAEIVNEETGLDTAEVQPEKSFTDDLDIDSISMMTIVVNAEDKFGVKIPDEEVKNLKTVQDAVDFIXGA.

Residues alanine 2–alanine 79 form the Carrier domain. An O-(pantetheine 4'-phosphoryl)serine modification is found at serine 40.

It belongs to the acyl carrier protein (ACP) family. 4'-phosphopantetheine is transferred from CoA to a specific serine of apo-ACP by AcpS. This modification is essential for activity because fatty acids are bound in thioester linkage to the sulfhydryl of the prosthetic group.

It is found in the cytoplasm. Its pathway is lipid metabolism; fatty acid biosynthesis. Its function is as follows. Carrier of the growing fatty acid chain in fatty acid biosynthesis. The sequence is that of Acyl carrier protein from Myxococcus xanthus.